A 657-amino-acid chain; its full sequence is tRNA 5-methylaminomethyl-2-thiouridine biosynthesis bifunctional protein MnmC (657 aa).

A tRNA (mnm(5)s(2)U34)-methyltransferase region spans residues M1–A236. The segment at I261 to D657 is FAD-dependent cmnm(5)s(2)U34 oxidoreductase.

The protein in the N-terminal section; belongs to the methyltransferase superfamily. tRNA (mnm(5)s(2)U34)-methyltransferase family. This sequence in the C-terminal section; belongs to the DAO family. FAD serves as cofactor.

It localises to the cytoplasm. The enzyme catalyses 5-aminomethyl-2-thiouridine(34) in tRNA + S-adenosyl-L-methionine = 5-methylaminomethyl-2-thiouridine(34) in tRNA + S-adenosyl-L-homocysteine + H(+). Catalyzes the last two steps in the biosynthesis of 5-methylaminomethyl-2-thiouridine (mnm(5)s(2)U) at the wobble position (U34) in tRNA. Catalyzes the FAD-dependent demodification of cmnm(5)s(2)U34 to nm(5)s(2)U34, followed by the transfer of a methyl group from S-adenosyl-L-methionine to nm(5)s(2)U34, to form mnm(5)s(2)U34. The protein is tRNA 5-methylaminomethyl-2-thiouridine biosynthesis bifunctional protein MnmC of Burkholderia multivorans (strain ATCC 17616 / 249).